The following is a 58-amino-acid chain: Conotoxin Im5.4 (58 aa).

A signal peptide spans 1–18 (MRCLPVVVFLLLLLSAAA). A propeptide spanning residues 19 to 28 (APGVGSKTER) is cleaved from the precursor.

The protein belongs to the conotoxin T superfamily. Contains 2 disulfide bonds that can be either 'C1-C3, C2-C4' or 'C1-C4, C2-C3', since these disulfide connectivities have been observed for conotoxins with cysteine framework V (for examples, see AC P0DQQ7 and AC P81755). In terms of tissue distribution, expressed by the venom duct.

Its subcellular location is the secreted. Its function is as follows. Probable neurotoxin. The protein is Conotoxin Im5.4 of Conus imperialis (Imperial cone).